Reading from the N-terminus, the 153-residue chain is UPF0743 protein YCR087C-A (153 aa).

C2HC LYAR-type zinc fingers lie at residues 1–26 and 27–52; these read MVTFNCEVCNDTVPKKNTEKHYYRCP and NAYYTCIDCSKTFEDGVSYKNHTSCI. Zn(2+) contacts are provided by cysteine 6, cysteine 9, histidine 21, cysteine 25, cysteine 32, cysteine 35, histidine 48, and cysteine 51. The disordered stretch occupies residues 63-96; the sequence is YKGNKKQKQKQQQKQQQKQHQHQPVATPAKKVEK. The span at 65 to 83 shows a compositional bias: basic residues; sequence GNKKQKQKQQQKQQQKQHQ.

The protein belongs to the UPF0743 family.

The protein resides in the nucleus. The protein localises to the nucleolus. In Saccharomyces cerevisiae (strain ATCC 204508 / S288c) (Baker's yeast), this protein is UPF0743 protein YCR087C-A.